Consider the following 375-residue polypeptide: Ribosomal RNA large subunit methyltransferase G (375 aa).

Belongs to the methyltransferase superfamily. RlmG family.

The protein localises to the cytoplasm. The enzyme catalyses guanosine(1835) in 23S rRNA + S-adenosyl-L-methionine = N(2)-methylguanosine(1835) in 23S rRNA + S-adenosyl-L-homocysteine + H(+). Its function is as follows. Specifically methylates the guanine in position 1835 (m2G1835) of 23S rRNA. The protein is Ribosomal RNA large subunit methyltransferase G of Erwinia tasmaniensis (strain DSM 17950 / CFBP 7177 / CIP 109463 / NCPPB 4357 / Et1/99).